A 489-amino-acid chain; its full sequence is Beta-dihydromenaquinone-9 omega-hydroxylase (489 aa).

Heme is bound at residue Cys435.

It belongs to the cytochrome P450 family. The cofactor is heme.

Its subcellular location is the cytoplasm. The enzyme catalyses beta-dihydromenaquinone-9 + 2 reduced [2Fe-2S]-[ferredoxin] + O2 + 2 H(+) = omega-hydroxy-beta-dihydromenaquinone-9 + 2 oxidized [2Fe-2S]-[ferredoxin] + H2O. Its function is as follows. Involved in the biosynthesis of sulfomenaquinone (SMK, initially named S881 on the basis of its mass), which is localized in the outer envelope of M.bovis and negatively regulates its virulence. Catalyzes the hydroxylation of beta-dihydromenaquinone-9, leading to the formation of omega-hydroxy-beta-dihydromenaquinone-9. The chain is Beta-dihydromenaquinone-9 omega-hydroxylase (cyp128) from Mycobacterium bovis (strain ATCC BAA-935 / AF2122/97).